We begin with the raw amino-acid sequence, 354 residues long: Phenylalanine--tRNA ligase alpha subunit (354 aa).

Glutamate 279 serves as a coordination point for Mg(2+).

This sequence belongs to the class-II aminoacyl-tRNA synthetase family. Phe-tRNA synthetase alpha subunit type 1 subfamily. Tetramer of two alpha and two beta subunits. Requires Mg(2+) as cofactor.

It is found in the cytoplasm. It carries out the reaction tRNA(Phe) + L-phenylalanine + ATP = L-phenylalanyl-tRNA(Phe) + AMP + diphosphate + H(+). This chain is Phenylalanine--tRNA ligase alpha subunit, found in Cupriavidus pinatubonensis (strain JMP 134 / LMG 1197) (Cupriavidus necator (strain JMP 134)).